The sequence spans 504 residues: Argininosuccinate lyase 2 (504 aa).

This sequence belongs to the lyase 1 family. Argininosuccinate lyase subfamily.

It is found in the cytoplasm. The enzyme catalyses 2-(N(omega)-L-arginino)succinate = fumarate + L-arginine. The protein operates within amino-acid biosynthesis; L-arginine biosynthesis; L-arginine from L-ornithine and carbamoyl phosphate: step 3/3. In Agrobacterium fabrum (strain C58 / ATCC 33970) (Agrobacterium tumefaciens (strain C58)), this protein is Argininosuccinate lyase 2.